The sequence spans 105 residues: Probable tetrachloroethene reductive dehalogenase membrane anchor protein (105 aa).

The next 3 helical transmembrane spans lie at 3–23 (IYDV…QYGI), 35–55 (IPLQ…LAWG), and 66–86 (AIGM…IITY).

This sequence belongs to the PceB family.

It localises to the cell membrane. Its function is as follows. May act as a membrane anchor for the tetrachloroethene reductive dehalogenase PceA. The sequence is that of Probable tetrachloroethene reductive dehalogenase membrane anchor protein from Desulfitobacterium hafniense (Desulfitobacterium frappieri).